Reading from the N-terminus, the 61-residue chain is Large ribosomal subunit protein bL32 (61 aa).

The span at 1 to 16 (MAVPKRKTSPSKRGMR) shows a compositional bias: basic residues. The disordered stretch occupies residues 1–40 (MAVPKRKTSPSKRGMRRSADALKAPTYIEDKNSGELRRPH). The segment covering 28 to 40 (IEDKNSGELRRPH) has biased composition (basic and acidic residues).

It belongs to the bacterial ribosomal protein bL32 family.

The sequence is that of Large ribosomal subunit protein bL32 from Sinorhizobium medicae (strain WSM419) (Ensifer medicae).